Here is a 59-residue protein sequence, read N- to C-terminus: RICYNHLGTKPPTTETCQEDSCYKNIWTFDNIIRRGCGCFTPRGDMPGPYCCESDKCNL.

Intrachain disulfides connect cysteine 3–cysteine 22, cysteine 17–cysteine 37, cysteine 39–cysteine 51, and cysteine 52–cysteine 57. The short motif at 43–45 (RGD) is the Cell attachment site element.

This sequence belongs to the three-finger toxin family. Short-chain subfamily. Antiplatelet toxin sub-subfamily. As to expression, expressed by the venom gland.

It localises to the secreted. Its function is as follows. Inhibits ADP-induced platelet aggregation and inhibits the binding of purified platelet fibrinogen receptor alpha-IIb/beta-3 (ITGA2B/ITGB3) to immobilized fibrinogen. Has also been described to inhibit cell adhesion to fibrinogen, fibronectin, laminin and collagen. The polypeptide is Dendroaspin (Dendroaspis jamesoni kaimosae (Eastern Jameson's mamba)).